Reading from the N-terminus, the 246-residue chain is TATA-box-binding protein (246 aa).

The interval 1-27 (MSSDKTSQQTFKLAPNNSVAQSNSIDQ) is disordered. 2 repeat units span residues 53-129 (LQNI…AKII) and 143-220 (IQNI…YWVL).

Belongs to the TBP family. As to quaternary structure, belongs to the TFIID complex together with the TBP-associated factors (TAFs). Binds DNA as monomer.

The protein localises to the nucleus. In terms of biological role, general transcription factor that functions at the core of the DNA-binding multiprotein factor TFIID. Binding of TFIID to the TATA box is the initial transcriptional step of the pre-initiation complex (PIC), playing a role in the activation of eukaryotic genes transcribed by RNA polymerase II. The polypeptide is TATA-box-binding protein (Tetrahymena thermophila).